Reading from the N-terminus, the 224-residue chain is Imidazoleglycerol-phosphate dehydratase (224 aa).

The protein belongs to the imidazoleglycerol-phosphate dehydratase family.

It carries out the reaction D-erythro-1-(imidazol-4-yl)glycerol 3-phosphate = 3-(imidazol-4-yl)-2-oxopropyl phosphate + H2O. The protein operates within amino-acid biosynthesis; L-histidine biosynthesis; L-histidine from 5-phospho-alpha-D-ribose 1-diphosphate: step 6/9. This chain is Imidazoleglycerol-phosphate dehydratase (HIS3), found in Komagataella pastoris (Yeast).